Reading from the N-terminus, the 168-residue chain is Sec-independent protein translocase protein TatB (168 aa).

The chain crosses the membrane as a helical span at residues 1–21 (MIDLGISKLALIGAVALIVIG).

The protein belongs to the TatB family. The Tat system comprises two distinct complexes: a TatABC complex, containing multiple copies of TatA, TatB and TatC subunits, and a separate TatA complex, containing only TatA subunits. Substrates initially bind to the TatABC complex, which probably triggers association of the separate TatA complex to form the active translocon.

The protein localises to the cell inner membrane. Its function is as follows. Part of the twin-arginine translocation (Tat) system that transports large folded proteins containing a characteristic twin-arginine motif in their signal peptide across membranes. Together with TatC, TatB is part of a receptor directly interacting with Tat signal peptides. TatB may form an oligomeric binding site that transiently accommodates folded Tat precursor proteins before their translocation. The polypeptide is Sec-independent protein translocase protein TatB (Cupriavidus pinatubonensis (strain JMP 134 / LMG 1197) (Cupriavidus necator (strain JMP 134))).